Here is a 506-residue protein sequence, read N- to C-terminus: (+)-piperitol/(+)-sesamin synthase CYP81Q2 (506 aa).

The helical transmembrane segment at 3–23 threads the bilayer; that stretch reads AEMLYSALALTFAIFMVYRIL. C439 lines the heme pocket.

The protein belongs to the cytochrome P450 family. Requires heme as cofactor. As to expression, expressed in seeds.

It localises to the membrane. The enzyme catalyses (+)-piperitol + reduced [NADPH--hemoprotein reductase] + O2 = (+)-sesamin + oxidized [NADPH--hemoprotein reductase] + 2 H2O + H(+). It catalyses the reaction (+)-pinoresinol + reduced [NADPH--hemoprotein reductase] + O2 = (+)-piperitol + oxidized [NADPH--hemoprotein reductase] + 2 H2O + H(+). Functionally, involved in the biosynthesis of (+)-sesamin, a furofuran class lignan. Functions in a dual catalytic mode. Catalyzes the synthesis of (+)-sesamin from (+)- pinoresinol by formation of two successive methylenedioxy bridges on (+)-pinoresinol and (+)-piperitol, respectively. The protein is (+)-piperitol/(+)-sesamin synthase CYP81Q2 of Sesamum radiatum (Black benniseed).